The following is a 241-amino-acid chain: Small ribosomal subunit protein uS3 (241 aa).

A KH type-2 domain is found at Ile-39–Glu-108. The tract at residues Ser-215–Lys-241 is disordered. A compositionally biased stretch (low complexity) spans Asn-232–Lys-241.

The protein belongs to the universal ribosomal protein uS3 family. In terms of assembly, part of the 30S ribosomal subunit. Forms a tight complex with proteins S10 and S14.

Its function is as follows. Binds the lower part of the 30S subunit head. Binds mRNA in the 70S ribosome, positioning it for translation. This is Small ribosomal subunit protein uS3 from Mesoplasma florum (strain ATCC 33453 / NBRC 100688 / NCTC 11704 / L1) (Acholeplasma florum).